We begin with the raw amino-acid sequence, 219 residues long: Small ribosomal subunit protein uS3 (219 aa).

A KH type-2 domain is found at Ile38–Lys107.

Belongs to the universal ribosomal protein uS3 family. In terms of assembly, part of the 30S ribosomal subunit. Forms a tight complex with proteins S10 and S14.

Its function is as follows. Binds the lower part of the 30S subunit head. Binds mRNA in the 70S ribosome, positioning it for translation. This is Small ribosomal subunit protein uS3 from Exiguobacterium sp. (strain ATCC BAA-1283 / AT1b).